The primary structure comprises 539 residues: Chaperonin GroEL (539 aa).

Residues 29-32 (TIGP), 86-90 (DGTTT), Gly413, 476-478 (NAA), and Asp492 contribute to the ATP site.

It belongs to the chaperonin (HSP60) family. In terms of assembly, forms a cylinder of 14 subunits composed of two heptameric rings stacked back-to-back. Interacts with the co-chaperonin GroES.

The protein resides in the cytoplasm. The catalysed reaction is ATP + H2O + a folded polypeptide = ADP + phosphate + an unfolded polypeptide.. Together with its co-chaperonin GroES, plays an essential role in assisting protein folding. The GroEL-GroES system forms a nano-cage that allows encapsulation of the non-native substrate proteins and provides a physical environment optimized to promote and accelerate protein folding. In Staphylococcus epidermidis, this protein is Chaperonin GroEL.